The primary structure comprises 1075 residues: Paired amphipathic helix protein pst2 (1075 aa).

3 PAH domains span residues 28–102 (SPNG…LPSS), 138–208 (LPCT…LPSS), and 243–319 (RPDN…TSLS). S641 and S643 each carry phosphoserine. Positions 647-700 (LTEFVKQPKINGQRESRSAAAARKKEESGNKSQSNSQNSLSDESGNVTPVSKKQ) are disordered. A compositionally biased stretch (basic and acidic residues) spans 658-675 (GQRESRSAAAARKKEESG). Low complexity predominate over residues 676–691 (NKSQSNSQNSLSDESG).

Heterotetramer of alp13, clr6, prw1 and pst2.

The protein localises to the nucleus. Functionally, has a role in chromatin assembly and chromosome segregation. Involved in the deacetylation of histones. This is Paired amphipathic helix protein pst2 (pst2) from Schizosaccharomyces pombe (strain 972 / ATCC 24843) (Fission yeast).